The chain runs to 171 residues: Adenine phosphoribosyltransferase (171 aa).

This sequence belongs to the purine/pyrimidine phosphoribosyltransferase family. As to quaternary structure, homodimer.

It localises to the cytoplasm. The catalysed reaction is AMP + diphosphate = 5-phospho-alpha-D-ribose 1-diphosphate + adenine. It functions in the pathway purine metabolism; AMP biosynthesis via salvage pathway; AMP from adenine: step 1/1. Catalyzes a salvage reaction resulting in the formation of AMP, that is energically less costly than de novo synthesis. The polypeptide is Adenine phosphoribosyltransferase (Nitrosococcus oceani (strain ATCC 19707 / BCRC 17464 / JCM 30415 / NCIMB 11848 / C-107)).